The chain runs to 337 residues: Viral cathepsin (337 aa).

The signal sequence occupies residues 1-16 (MNKILILLLLVSAVLT). The propeptide at 17-126 (SHDQVVAVTI…VVDGPGQRQR (110 aa)) is activation peptide. 3 disulfides stabilise this stretch: cysteine 147–cysteine 188, cysteine 181–cysteine 221, and cysteine 276–cysteine 324. Cysteine 150 is a catalytic residue. Catalysis depends on residues histidine 283 and asparagine 303.

Belongs to the peptidase C1 family. Post-translationally, synthesized as an inactive proenzyme and activated by proteolytic removal of the inhibitory propeptide.

It catalyses the reaction Endopeptidase of broad specificity, hydrolyzing substrates of both cathepsin L and cathepsin B.. Cysteine protease that plays an essential role in host liquefaction to facilitate horizontal transmission of the virus. May participate in the degradation of foreign protein expressed by the baculovirus system. The chain is Viral cathepsin (VCATH) from Mamestra configurata (bertha armyworm).